The following is a 356-amino-acid chain: tRNA N6-adenosine threonylcarbamoyltransferase (356 aa).

The Fe cation site is built by His115 and His119. Substrate is bound by residues 138–142 (LVSGG), Asp171, Gly184, and Asn283. Asp311 contributes to the Fe cation binding site.

This sequence belongs to the KAE1 / TsaD family. The cofactor is Fe(2+).

The protein localises to the cytoplasm. It catalyses the reaction L-threonylcarbamoyladenylate + adenosine(37) in tRNA = N(6)-L-threonylcarbamoyladenosine(37) in tRNA + AMP + H(+). Its function is as follows. Required for the formation of a threonylcarbamoyl group on adenosine at position 37 (t(6)A37) in tRNAs that read codons beginning with adenine. Is involved in the transfer of the threonylcarbamoyl moiety of threonylcarbamoyl-AMP (TC-AMP) to the N6 group of A37, together with TsaE and TsaB. TsaD likely plays a direct catalytic role in this reaction. In Prochlorococcus marinus (strain MIT 9313), this protein is tRNA N6-adenosine threonylcarbamoyltransferase.